The sequence spans 1020 residues: Calcium-transporting ATPase 10, plasma membrane-type (1020 aa).

Topologically, residues 1–175 (MESYLEENFG…FVWEALQDTT (175 aa)) are cytoplasmic. The tract at residues 21–32 (ALRRWRKLCGVV) is interaction with calmodulin. Helical transmembrane passes span 176–196 (LIIL…MEGW) and 199–219 (GAHD…VTAT). The Cytoplasmic portion of the chain corresponds to 220 to 263 (SDYRQSLQFKDLDKEKKKIQVQVTRNGFRQRLSIYDLLPGDVVH). 2 helical membrane-spanning segments follow: residues 264 to 284 (LAIG…SLLI) and 352 to 372 (GVAT…FIVL). Residues 373-400 (SQGLISKKYHEGLLLSWSGDDALEMLEH) are Cytoplasmic-facing. The chain crosses the membrane as a helical span at residues 401 to 421 (FAIAVTIVVVAVPEGLPLAVT). Residue Asp456 is the 4-aspartylphosphate intermediate of the active site. Positions 758 and 762 each coordinate Mg(2+). Residues 843-863 (LTAVQLLWVNMIMDTLGALAL) traverse the membrane as a helical segment. Residues 864–887 (ATEPPNDDLMKREPVGRTGKFITN) are Cytoplasmic-facing. The next 2 helical transmembrane spans lie at 888–907 (VMWR…MWYL) and 924–944 (VVLN…NEIS). At 945–961 (SREMEKINVLRGILKNY) the chain is on the cytoplasmic side. 2 helical membrane passes run 962 to 982 (VFLG…QFLG) and 995 to 1015 (WIAS…IKLL). Topologically, residues 1016–1020 (PVGSS) are cytoplasmic.

Belongs to the cation transport ATPase (P-type) (TC 3.A.3) family. Type IIB subfamily.

It localises to the membrane. The catalysed reaction is Ca(2+)(in) + ATP + H2O = Ca(2+)(out) + ADP + phosphate + H(+). With respect to regulation, activated by calmodulin. Its function is as follows. This magnesium-dependent enzyme catalyzes the hydrolysis of ATP coupled with the translocation of calcium from the cytosol out of the cell, into the endoplasmic reticulum, or into organelles. This Oryza sativa subsp. japonica (Rice) protein is Calcium-transporting ATPase 10, plasma membrane-type.